A 525-amino-acid chain; its full sequence is GMP synthase [glutamine-hydrolyzing] (525 aa).

The Glutamine amidotransferase type-1 domain occupies 9–207 (RILILDFGSQ…VLGICGCEAL (199 aa)). The active-site Nucleophile is cysteine 86. Active-site residues include histidine 181 and glutamate 183. Residues 208 to 400 (WTSATIIEDA…LGLPYDMLYR (193 aa)) enclose the GMPS ATP-PPase domain. 235-241 (SGGVDSS) serves as a coordination point for ATP.

In terms of assembly, homodimer.

The catalysed reaction is XMP + L-glutamine + ATP + H2O = GMP + L-glutamate + AMP + diphosphate + 2 H(+). The protein operates within purine metabolism; GMP biosynthesis; GMP from XMP (L-Gln route): step 1/1. Its function is as follows. Catalyzes the synthesis of GMP from XMP. The polypeptide is GMP synthase [glutamine-hydrolyzing] (Yersinia pseudotuberculosis serotype IB (strain PB1/+)).